Consider the following 155-residue polypeptide: MDYEIKQEKKRTIAGFHLVGPWEKTVKQGFDQLMMWVENHNIEPLEWVAVYYDNPDEVPAEKLRCDTVVTVPENFCLPENSEGVNVTEIAGGQYAVTVARVQGHDFGTPWYQFINSLLEDSQYQMAHKPCFEVYLNNGAVDGYWDIEMYVPVLPK.

The protein belongs to the DNA gyrase inhibitor family. As to quaternary structure, interacts with DNA gyrase.

It is found in the cytoplasm. Functionally, inhibits the supercoiling activity of DNA gyrase. Acts by inhibiting DNA gyrase at an early step, prior to (or at the step of) binding of DNA by the gyrase. It protects cells against toxins that target DNA gyrase, by inhibiting activity of these toxins and reducing the formation of lethal double-strand breaks in the cell. The sequence is that of DNA gyrase inhibitor from Escherichia fergusonii (strain ATCC 35469 / DSM 13698 / CCUG 18766 / IAM 14443 / JCM 21226 / LMG 7866 / NBRC 102419 / NCTC 12128 / CDC 0568-73).